The primary structure comprises 72 residues: DNA-directed RNA polymerase subunit omega (72 aa).

This sequence belongs to the RNA polymerase subunit omega family. In terms of assembly, the RNAP catalytic core consists of 2 alpha, 1 beta, 1 beta' and 1 omega subunit. When a sigma factor is associated with the core the holoenzyme is formed, which can initiate transcription.

It carries out the reaction RNA(n) + a ribonucleoside 5'-triphosphate = RNA(n+1) + diphosphate. Functionally, promotes RNA polymerase assembly. Latches the N- and C-terminal regions of the beta' subunit thereby facilitating its interaction with the beta and alpha subunits. The sequence is that of DNA-directed RNA polymerase subunit omega from Limosilactobacillus reuteri (strain DSM 20016) (Lactobacillus reuteri).